The sequence spans 292 residues: N-acetylneuraminate lyase (292 aa).

Residues S47 and T48 each coordinate aceneuramate. Y136 functions as the Proton donor in the catalytic mechanism. The active-site Schiff-base intermediate with substrate is K164. Aceneuramate contacts are provided by T166, G188, D190, E191, and S207.

This sequence belongs to the DapA family. NanA subfamily. As to quaternary structure, homotetramer.

The protein resides in the cytoplasm. The catalysed reaction is aceneuramate = aldehydo-N-acetyl-D-mannosamine + pyruvate. It participates in amino-sugar metabolism; N-acetylneuraminate degradation; D-fructose 6-phosphate from N-acetylneuraminate: step 1/5. In terms of biological role, catalyzes the reversible aldol cleavage of N-acetylneuraminic acid (sialic acid; Neu5Ac) to form pyruvate and N-acetylmannosamine (ManNAc) via a Schiff base intermediate. This chain is N-acetylneuraminate lyase, found in Actinobacillus pleuropneumoniae serotype 5b (strain L20).